We begin with the raw amino-acid sequence, 135 residues long: UPF0355 protein SE_2351 (135 aa).

The protein belongs to the UPF0355 family.

The protein is UPF0355 protein SE_2351 of Staphylococcus epidermidis (strain ATCC 12228 / FDA PCI 1200).